Here is a 103-residue protein sequence, read N- to C-terminus: Sec-independent protein translocase protein TatA (103 aa).

Residues 1–21 (MGNIFSPTHLIVILLIIIVLF) form a helical membrane-spanning segment. The segment at 77–103 (KRATTRVKGSSSSRKGKTSVVKKQRVK) is disordered. Over residues 90–103 (RKGKTSVVKKQRVK) the composition is skewed to basic residues.

The protein belongs to the TatA/E family. The Tat system comprises two distinct complexes: a TatABC complex, containing multiple copies of TatA, TatB and TatC subunits, and a separate TatA complex, containing only TatA subunits. Substrates initially bind to the TatABC complex, which probably triggers association of the separate TatA complex to form the active translocon.

It localises to the cell inner membrane. In terms of biological role, part of the twin-arginine translocation (Tat) system that transports large folded proteins containing a characteristic twin-arginine motif in their signal peptide across membranes. TatA could form the protein-conducting channel of the Tat system. This Bartonella henselae (strain ATCC 49882 / DSM 28221 / CCUG 30454 / Houston 1) (Rochalimaea henselae) protein is Sec-independent protein translocase protein TatA.